The following is a 231-amino-acid chain: Large ribosomal subunit protein uL1 (231 aa).

The protein belongs to the universal ribosomal protein uL1 family. Part of the 50S ribosomal subunit.

In terms of biological role, binds directly to 23S rRNA. The L1 stalk is quite mobile in the ribosome, and is involved in E site tRNA release. Its function is as follows. Protein L1 is also a translational repressor protein, it controls the translation of the L11 operon by binding to its mRNA. The chain is Large ribosomal subunit protein uL1 from Chromobacterium violaceum (strain ATCC 12472 / DSM 30191 / JCM 1249 / CCUG 213 / NBRC 12614 / NCIMB 9131 / NCTC 9757 / MK).